Here is a 1044-residue protein sequence, read N- to C-terminus: Diacylglycerol lipase-alpha (1044 aa).

Topologically, residues 1–22 (MPGIVVFRRRWSVGSDDLVLPA) are cytoplasmic. A helical transmembrane segment spans residues 23–43 (IFLFLLHTTWFVILSVVLFGL). Residues 44–60 (VYNPHEACSLNLVDHGR) lie on the Extracellular side of the membrane. Residues 61-81 (GYLGILLSCMIAEMAIIWLSM) form a helical membrane-spanning segment. Over 82-101 (RGGILYTEPRDSMQYVLYVR) the chain is Cytoplasmic. A helical transmembrane segment spans residues 102–122 (LAILVIEFIYAIVGIVWLTQY). At 123–136 (YTSCNDLTAKNVTL) the chain is on the extracellular side. The N-linked (GlcNAc...) asparagine glycan is linked to Asn-133. Residues 137–157 (GMVVCNWVVILSVCITVLCVF) traverse the membrane as a helical segment. Residues 158-1044 (DPTGRTFVKL…KQDDLVISAR (887 aa)) lie on the Cytoplasmic side of the membrane. Catalysis depends on charge relay system residues Ser-472 and Asp-524. A phosphoserine mark is found at Ser-728, Ser-730, Ser-733, Ser-744, Ser-784, Ser-786, Ser-808, Ser-810, Ser-835, Ser-849, and Ser-954. The segment at 848-905 (LSKHSQDTQPLEAALGSGGVTPERPPSAANDEEEAAGGSEGGGVAPRGELALHNGRLG) is disordered. The tract at residues 1013-1044 (QECLATDKIRTSTPTGHGASPTKQDDLVISAR) is disordered. Thr-1025 is modified (phosphothreonine).

Belongs to the AB hydrolase superfamily. Lipase family. In terms of assembly, interacts (via C-terminal) with CAMK2A; leading to the phosphorylation and inhibition of DAGLA enzymatic activity. Interacts (via PPXXF motif) with HOMER1 and HOMER2; this interaction is required for DAGLA membrane localization. The cofactor is Ca(2+). Phosphorylated at Ser-784 and Ser-810 by CAMK2A; phosphorylation by CAMK2A inhibits diacylglycerol lipase activity.

The protein localises to the cell membrane. It is found in the cell projection. It localises to the dendritic spine membrane. The protein resides in the postsynaptic density membrane. Its subcellular location is the early endosome membrane. The enzyme catalyses a 1,2-diacyl-sn-glycerol + H2O = a 2-acylglycerol + a fatty acid + H(+). It catalyses the reaction 1-octadecanoyl-2-(5Z,8Z,11Z,14Z-eicosatetraenoyl)-sn-glycerol + H2O = 2-(5Z,8Z,11Z,14Z-eicosatetraenoyl)-glycerol + octadecanoate + H(+). The catalysed reaction is 1,2-di-(9Z-octadecenoyl)-sn-glycerol + H2O = 2-(9Z-octadecenoyl)-glycerol + (9Z)-octadecenoate + H(+). It carries out the reaction 1-(9Z-octadecenoyl)-2-(5Z,8Z,11Z,14Z-eicosatetraenoyl)-sn-glycerol + H2O = 2-(5Z,8Z,11Z,14Z-eicosatetraenoyl)-glycerol + (9Z)-octadecenoate + H(+). The enzyme catalyses 1-(9Z-octadecenoyl)-2-octadecanoyl-sn-glycerol + H2O = 2-octadecanoylglycerol + (9Z)-octadecenoate + H(+). It catalyses the reaction 1-(9Z-octadecenoyl)-2-(9Z,12Z-octadecadienoyl)-sn-glycerol + H2O = 2-(9Z,12Z-octadecadienoyl)-glycerol + (9Z)-octadecenoate + H(+). The catalysed reaction is 1-(9Z-octadecenoyl)-2-O-(5Z,8Z,11Z,14Z-eicosatetraenyl)-sn-glycerol + H2O = 2-O-(5Z,8Z,11Z,14Z)-eicosatetraenylglycerol + (9Z)-octadecenoate + H(+). With respect to regulation, inhibited by 1,2,3-triazole urea covalent inhibitors KT172, DH376 and DO34. Inhibited by p-hydroxy-mercuri-benzoate and HgCl(2), but not to PMSF. Also inhibited by RHC80267. Diacylglycerol lipase activity is inhibited by the phosphorylation of Ser-784 and Ser-810 by CAMK2A. In terms of biological role, serine hydrolase that hydrolyzes arachidonic acid-esterified diacylglycerols (DAGs) to produce the principal endocannabinoid, 2-arachidonoylglycerol (2-AG). Preferentially hydrolyzes sn-1 fatty acids from diacylglycerols (DAG) that contain arachidonic acid (AA) esterified at the sn-2 position to biosynthesize 2-AG. Has negligible activity against other lipids including monoacylglycerols and phospholipids. Plays a key role in regulating 2-AG signaling in the CNS. Controls the activity of 2-AG as a retrograde messenger at neuronal synapses. Supports axonal growth during development and adult neurogenesis. Plays a role for eCB signaling in the physiological regulation of anxiety and depressive behaviors. Also regulates neuroinflammatory responses in the brain, in particular, LPS-induced microglial activation. The chain is Diacylglycerol lipase-alpha (Dagla) from Rattus norvegicus (Rat).